The sequence spans 212 residues: Nucleoredoxin-like protein 1 (212 aa).

In terms of domain architecture, Thioredoxin spans 1 to 164; it reads MASLFSGRIL…AAEVLDRNFQ (164 aa). The disordered stretch occupies residues 191-212; it reads AARGGRDPGGGGGEEGGAGGLF. Over residues 197–212 the composition is skewed to gly residues; the sequence is DPGGGGGEEGGAGGLF.

It belongs to the nucleoredoxin family. In terms of assembly, interacts with isoform 1 of BSG.

It localises to the cell projection. The protein resides in the cilium. Its subcellular location is the photoreceptor outer segment. In terms of biological role, plays an important role in retinal cone photoreceptor survival. In association with glucose transporter SLC16A1/GLUT1 and BSG, promotes retinal cone survival by enhancing aerobic glycolysis and accelerating the entry of glucose into photoreceptors. May play a role in cone cell viability, slowing down cone degeneration, does not seem to play a role in degenerating rods. The protein is Nucleoredoxin-like protein 1 (NXNL1) of Homo sapiens (Human).